Consider the following 744-residue polypeptide: Tripartite motif-containing protein 2 (744 aa).

Ser10 is subject to Phosphoserine. The segment at 23–64 (CSICLERYKNPKVLPCLHTFCERCLQNYIPAHSLTLSCPVCR) adopts an RING-type zinc-finger fold. The B box-type zinc-finger motif lies at 113 to 154 (GKPLSCPNHDGNVMDFYCQSCETAMCRECTEGEHAEHPTVPL). The Zn(2+) site is built by Cys118, His121, Cys141, and His146. The Filamin repeat unit spans residues 320 to 421 (TTNAVASETV…IRGSPFKLKV (102 aa)). Residue Thr371 is modified to Phosphothreonine. Residues Ser375, Ser424, and Ser428 each carry the phosphoserine modification. Residues 432 to 462 (EGVKRRVKSPGSGHVKQKAVKRPASMYSTGK) are disordered. 6 NHL repeats span residues 473 to 516 (IFRV…FSND), 520 to 563 (KSRF…FSSD), 564 to 605 (GKFK…FQPN), 609 to 652 (VTRF…FNQE), 656 to 699 (MLKF…FDGS), and 700 to 743 (GSFL…YRYL).

It belongs to the TRIM/RBCC family. In terms of assembly, forms homooligomers. Interacts with TRIM3; this interaction reduces TRIM2 activity. Interacts with myosin V; myosin V may not be a substrate for ubiquitination. Interacts with NEFL. Interacts with phosphorylated BCL2L11. Interacts with SIRPA. Post-translationally, RING-type zinc finger-dependent and UBE2D1-dependent autoubiquitination.

The protein localises to the cytoplasm. The enzyme catalyses S-ubiquitinyl-[E2 ubiquitin-conjugating enzyme]-L-cysteine + [acceptor protein]-L-lysine = [E2 ubiquitin-conjugating enzyme]-L-cysteine + N(6)-ubiquitinyl-[acceptor protein]-L-lysine.. Its pathway is protein modification; protein ubiquitination. In terms of biological role, UBE2D1-dependent E3 ubiquitin-protein ligase that mediates the ubiquitination of NEFL and of phosphorylated BCL2L11. Plays a neuroprotective function. May play a role in neuronal rapid ischemic tolerance. Plays a role in antiviral immunity and limits New World arenavirus infection independently of its ubiquitin ligase activity. The polypeptide is Tripartite motif-containing protein 2 (TRIM2) (Ailuropoda melanoleuca (Giant panda)).